The sequence spans 284 residues: Cell division protein DivIB (284 aa).

Positions Met-1 to Pro-21 are disordered. Residues Met-1–Arg-63 lie on the Cytoplasmic side of the membrane. The helical transmembrane segment at Val-64–Pro-84 threads the bilayer. Residues Val-85 to Lys-284 lie on the Extracellular side of the membrane. The POTRA domain maps to Ser-86–Tyr-156.

The protein belongs to the FtsQ/DivIB family. DivIB subfamily.

It localises to the cell membrane. Functionally, cell division protein that may be involved in stabilizing or promoting the assembly of the division complex. This Ligilactobacillus salivarius (strain CECT 5713) (Lactobacillus salivarius) protein is Cell division protein DivIB.